A 1377-amino-acid polypeptide reads, in one-letter code: DNA-directed RNA polymerase subunit beta' (1377 aa).

Zn(2+)-binding residues include cysteine 60, cysteine 62, cysteine 75, and cysteine 78. Residues aspartate 449, aspartate 451, and aspartate 453 each contribute to the Mg(2+) site. Cysteine 777, cysteine 851, cysteine 858, and cysteine 861 together coordinate Zn(2+).

This sequence belongs to the RNA polymerase beta' chain family. The RNAP catalytic core consists of 2 alpha, 1 beta, 1 beta' and 1 omega subunit. When a sigma factor is associated with the core the holoenzyme is formed, which can initiate transcription. It depends on Mg(2+) as a cofactor. Requires Zn(2+) as cofactor.

It catalyses the reaction RNA(n) + a ribonucleoside 5'-triphosphate = RNA(n+1) + diphosphate. DNA-dependent RNA polymerase catalyzes the transcription of DNA into RNA using the four ribonucleoside triphosphates as substrates. This is DNA-directed RNA polymerase subunit beta' from Borreliella burgdorferi (strain ZS7) (Borrelia burgdorferi).